The sequence spans 392 residues: Odorant receptor 85f (392 aa).

Residues 1–36 (MEPVQYSYEDFARLPTTVFWIMGYDMLGVPKTRSRR) are Cytoplasmic-facing. Residues 37–57 (ILYWIYRFLCLASHGVCVGVM) traverse the membrane as a helical segment. Residues 58–69 (VFRMVEAKTIDN) lie on the Extracellular side of the membrane. N-linked (GlcNAc...) asparagine glycosylation is present at Asn69. Residues 70-90 (VSLIMRYATLVTYIINSDTKF) traverse the membrane as a helical segment. The Cytoplasmic portion of the chain corresponds to 91-130 (ATVLQRSAIQSLNSKLAELYPKTTLDRIYHRVNDHYWTKS). The chain crosses the membrane as a helical span at residues 131 to 151 (FVYLVIIYIGSSIMVVIGPII). The Extracellular portion of the chain corresponds to 152–179 (TSIIAYFTHNVFTYMHCYPYFLYDPEKD). Residues 180–200 (PVWIYISIYALEWLHSTQMVI) traverse the membrane as a helical segment. The Cytoplasmic segment spans residues 201-268 (SNIGADIWLL…NDLNGIFGKS (68 aa)). Residues 269–289 (LLLSLLTTAAVICTVAVYTLI) traverse the membrane as a helical segment. Residues 290 to 295 (QGPTLE) lie on the Extracellular side of the membrane. The chain crosses the membrane as a helical span at residues 296–316 (GFTYVIFIGTSVMQVYLVCYY). The Cytoplasmic portion of the chain corresponds to 317–363 (GQQVLDLSGEVAHAVYNHDFHDASIAYKRYLLIIIIRAQQPVELNAM). A helical transmembrane segment spans residues 364-384 (GYLSISLDTFKQLMSVSYRVI). Over 385 to 392 (TMLMQMIQ) the chain is Extracellular.

Belongs to the insect chemoreceptor superfamily. Heteromeric odorant receptor channel (TC 1.A.69) family. Or49a subfamily. As to quaternary structure, interacts with Orco. Complexes exist early in the endomembrane system in olfactory sensory neurons (OSNs), coupling these complexes to the conserved ciliary trafficking pathway. As to expression, expressed in olfactory sensory neurons in the antenna.

The protein resides in the cell membrane. Functionally, odorant receptor which mediates acceptance or avoidance behavior, depending on its substrates. The odorant receptor repertoire encodes a large collection of odor stimuli that vary widely in identity, intensity, and duration. May form a complex with Orco to form odorant-sensing units, providing sensitive and prolonged odorant signaling and calcium permeability. This Drosophila melanogaster (Fruit fly) protein is Odorant receptor 85f (Or85f).